Here is a 200-residue protein sequence, read N- to C-terminus: MKVLVTGFEPFGGDDKNPTMEIVKFLDGKEIGGAKVIGRVLPVSFKRARKELVAILDEIKPDVTINLGLAPGRTHISVERVAVNIIDARIPDNDGEKPIDEPIVENGPAAYFATIPTREIVEEMKRNNIPAVLSYTAGTYLCNFVMYLTLHHSATKGYPRKAGFIHVPYTPDQVIEKKNTPSMSLELEIKGVEIAIRKSL.

Catalysis depends on residues glutamate 79, cysteine 142, and histidine 166.

The protein belongs to the peptidase C15 family. In terms of assembly, homotetramer.

It localises to the cytoplasm. The enzyme catalyses Release of an N-terminal pyroglutamyl group from a polypeptide, the second amino acid generally not being Pro.. Functionally, removes 5-oxoproline from various penultimate amino acid residues except L-proline. This chain is Pyrrolidone-carboxylate peptidase (pcp), found in Pyrococcus abyssi (strain GE5 / Orsay).